We begin with the raw amino-acid sequence, 268 residues long: Secreted RxLR effector protein 5 (268 aa).

A signal peptide spans 1–21; that stretch reads MRGAFYMAITLFLARSRSATA. The RxLR-dEER motif lies at 48–63; it reads RYLRDGLALSAANEER. N104 carries N-linked (GlcNAc...) asparagine glycosylation.

It belongs to the RxLR effector family.

The protein resides in the secreted. Its subcellular location is the host nucleus. In terms of biological role, effector that acts as a broad suppressor of cell death to interrupt plant immunity. Inhibits cell death induced by cell death-inducing proteins, including the PAMP elicitor INF1 from P.infestans. The polypeptide is Secreted RxLR effector protein 5 (Plasmopara viticola (Downy mildew of grapevine)).